Here is a 415-residue protein sequence, read N- to C-terminus: MHSWPEPEVPQLPGEAPQLRLYDTADDVVKPVEIPAGEVGMYVCGITPYDSTHLGHAATYLTFDLIHRYLRAAGHGVHYVQNITDVDDPLFERAERDGVDWQDLGTSQIDLFRSDMEDLAVIPPRDYIGAMESIDEVIEMVAKLLEVGAAYQLEGDEYPDIYADYTFLPQFGYESRYDEQQMAEFFAERGGDPERPGKRHPMDALLWRAHREGEPKWDSPFGPGRPGWHIECSAIAVNRLGAPFAIQGGGSDLRFPHHEFSATHAEAAHGVDRMAHHYVHTGMIGLDGTKMSKSLGNLVFVSRLTAAGHEPAAIRLGVYAGHYRQDRDWTNDVLAHAEHRLASWRAALATGSTTLDEARELVATVRGHLANDLDTAAALEALDDWAADTKTGAAGDEAAASEIKTAIDALLGVRL.

Residue Cys-44 coordinates Zn(2+). Residues 44-47 (CGIT), Thr-59, and 82-84 (NIT) contribute to the L-cysteinyl-5'-AMP site. Positions 46-56 (ITPYDSTHLGH) match the 'HIGH' region motif. Residues 188–193 (ERGGDP) carry the 'ERGGDP' region motif. Position 228 (Trp-228) interacts with L-cysteinyl-5'-AMP. Cys-232 is a Zn(2+) binding site. 250-252 (GSD) contributes to the L-cysteinyl-5'-AMP binding site. Zn(2+) is bound at residue His-257. Residue Ile-284 participates in L-cysteinyl-5'-AMP binding. Positions 290-294 (KMSKS) match the 'KMSKS' region motif.

The protein belongs to the class-I aminoacyl-tRNA synthetase family. MshC subfamily. Monomer. The cofactor is Zn(2+).

It carries out the reaction 1D-myo-inositol 2-amino-2-deoxy-alpha-D-glucopyranoside + L-cysteine + ATP = 1D-myo-inositol 2-(L-cysteinylamino)-2-deoxy-alpha-D-glucopyranoside + AMP + diphosphate + H(+). Catalyzes the ATP-dependent condensation of GlcN-Ins and L-cysteine to form L-Cys-GlcN-Ins. In Corynebacterium jeikeium (strain K411), this protein is L-cysteine:1D-myo-inositol 2-amino-2-deoxy-alpha-D-glucopyranoside ligase 2.